Here is a 572-residue protein sequence, read N- to C-terminus: Urease subunit alpha (572 aa).

The region spanning 134–572 (AGIDSHIHLI…AAMNQRYFFG (439 aa)) is the Urease domain. Residues His139, His141, and Lys222 each contribute to the Ni(2+) site. Lys222 carries the post-translational modification N6-carboxylysine. His224 lines the substrate pocket. Ni(2+)-binding residues include His251 and His277. His325 (proton donor) is an active-site residue. Asp365 contacts Ni(2+).

This sequence belongs to the metallo-dependent hydrolases superfamily. Urease alpha subunit family. As to quaternary structure, heterotrimer of UreA (gamma), UreB (beta) and UreC (alpha) subunits. Three heterotrimers associate to form the active enzyme. It depends on Ni cation as a cofactor. In terms of processing, carboxylation allows a single lysine to coordinate two nickel ions.

The protein resides in the cytoplasm. The catalysed reaction is urea + 2 H2O + H(+) = hydrogencarbonate + 2 NH4(+). Its pathway is nitrogen metabolism; urea degradation; CO(2) and NH(3) from urea (urease route): step 1/1. The chain is Urease subunit alpha from Yersinia enterocolitica serotype O:8 / biotype 1B (strain NCTC 13174 / 8081).